A 265-amino-acid polypeptide reads, in one-letter code: Hydroxyethylthiazole kinase (265 aa).

Residue Met-43 coordinates substrate. Residues Lys-118 and Thr-165 each coordinate ATP. Residue Gly-192 participates in substrate binding.

Belongs to the Thz kinase family. Mg(2+) serves as cofactor.

It carries out the reaction 5-(2-hydroxyethyl)-4-methylthiazole + ATP = 4-methyl-5-(2-phosphooxyethyl)-thiazole + ADP + H(+). It functions in the pathway cofactor biosynthesis; thiamine diphosphate biosynthesis; 4-methyl-5-(2-phosphoethyl)-thiazole from 5-(2-hydroxyethyl)-4-methylthiazole: step 1/1. Functionally, catalyzes the phosphorylation of the hydroxyl group of 4-methyl-5-beta-hydroxyethylthiazole (THZ). The chain is Hydroxyethylthiazole kinase from Pyrococcus furiosus (strain ATCC 43587 / DSM 3638 / JCM 8422 / Vc1).